We begin with the raw amino-acid sequence, 355 residues long: MSNVIIDLKNIDITFTQKRRTIQAVKDVSIQIEKGDIYGIVGYSGAGKSTLVRAINLLQVPTAGKITIGEDVTFEDGKVQLTTKELRQKRQTIGMIFQHFNLMAQKTAYENVAFALRHSKLSNEEKDKKIRGLLELVDLADRAENYPAQLSGGQKQRVAIARALANDPEILISDESTSALDPKTTKQILSLLQDLNKKLGLTVVMITHEMQIVKDICNRVAVMQNGQLLEEGSVLDIFSNPQEDLTQEFIETAAGIEDALAKINAQPLVKNLPASALLVQLKYVGSSTDRPLLTEIFKDFGVSGNILYGNVEILGDTPVGELVVVLDGDSDKVIAALKAIENAGVSLRVLKKGAQ.

Residues 8–250 (LKNIDITFTQ…PQEDLTQEFI (243 aa)) enclose the ABC transporter domain. 42 to 49 (GYSGAGKS) serves as a coordination point for ATP.

Belongs to the ABC transporter superfamily. Methionine importer (TC 3.A.1.24) family. As to quaternary structure, the complex is composed of two ATP-binding proteins (MetN), two transmembrane proteins (MetI) and a solute-binding protein (MetQ).

The protein localises to the cell membrane. It carries out the reaction L-methionine(out) + ATP + H2O = L-methionine(in) + ADP + phosphate + H(+). It catalyses the reaction D-methionine(out) + ATP + H2O = D-methionine(in) + ADP + phosphate + H(+). Functionally, part of the ABC transporter complex MetNIQ involved in methionine import. Responsible for energy coupling to the transport system. The sequence is that of Methionine import ATP-binding protein MetN from Streptococcus thermophilus (strain ATCC BAA-250 / LMG 18311).